Reading from the N-terminus, the 466-residue chain is Asparagine--tRNA ligase (466 aa).

Belongs to the class-II aminoacyl-tRNA synthetase family. Homodimer.

It is found in the cytoplasm. It catalyses the reaction tRNA(Asn) + L-asparagine + ATP = L-asparaginyl-tRNA(Asn) + AMP + diphosphate + H(+). The sequence is that of Asparagine--tRNA ligase from Shewanella sp. (strain ANA-3).